The following is a 234-amino-acid chain: MTIKRTKDINHDTFRKAWRNYRLAPVAIAVSAVFMLSACEKSDETVSLYMNADECSQANPSQSEQCTTAYNNALKEAEKTAPKYATKEDCIAEFGEAQCTQTPAQAGLGTTTSSTSTNGEAQAQQQQSGSFWMPLMAGYMMGRLMGGGSAPSQPLFSSKSATSPANGQFVDSTGKSYGPATAGGRSMTVPKTAMAPKPATTTTITRGGFGDSVAKQSTMQRSASSGSTSRSVGG.

Disordered stretches follow at residues 105-129 (QAGL…QQSG) and 149-234 (SAPS…SVGG). Positions 110-127 (TTTSSTSTNGEAQAQQQQ) are enriched in low complexity. Polar residues predominate over residues 150–175 (APSQPLFSSKSATSPANGQFVDSTGK). Low complexity-rich tracts occupy residues 188-205 (TVPK…TTIT) and 216-234 (QSTM…SVGG).

Belongs to the UPF0441 family.

The polypeptide is UPF0441 protein plu3956 (Photorhabdus laumondii subsp. laumondii (strain DSM 15139 / CIP 105565 / TT01) (Photorhabdus luminescens subsp. laumondii)).